The chain runs to 258 residues: Phosphate import ATP-binding protein PstB 1 (258 aa).

One can recognise an ABC transporter domain in the interval 5 to 247 (LDLTDVNIYY…EKIFSNPNQK (243 aa)). Residue 37–44 (GPSGCGKT) coordinates ATP.

The protein belongs to the ABC transporter superfamily. Phosphate importer (TC 3.A.1.7) family. The complex is composed of two ATP-binding proteins (PstB), two transmembrane proteins (PstC and PstA) and a solute-binding protein (PstS).

It is found in the cell membrane. The catalysed reaction is phosphate(out) + ATP + H2O = ADP + 2 phosphate(in) + H(+). Part of the ABC transporter complex PstSACB involved in phosphate import. Responsible for energy coupling to the transport system. This chain is Phosphate import ATP-binding protein PstB 1, found in Mycobacterium bovis (strain ATCC BAA-935 / AF2122/97).